A 387-amino-acid polypeptide reads, in one-letter code: Acyltransferase MdmB (387 aa).

A run of 10 helical transmembrane segments spans residues 8-28 (LPSLTGLRWFAALAVFACHIA), 45-65 (ITTLGSIAVSVFFLLSGFVLA), 85-105 (IYPLHLVTFLIAGVIIFSLAE), 139-161 (TPSWSLSCEFAFYLTFPLWYRLV), 170-190 (WWCAAGIAAAVICVPFVTSQF), 209-229 (CWLPPVRMLEFVLGIVMALIL), 236-256 (GPGVVSSALLLAAAYGVTQVV), 258-278 (PMFTIAACSIVPAALLITALA), 292-312 (AVLVRLGEWSFAFYLVHFMVI), and 336-356 (ALALAMLAVAIVAGGLLHTVV).

This sequence belongs to the acyltransferase 3 family.

It is found in the cell membrane. Catalyzes the acylation of the mycaminose sugar during midecamycin biosynthesis. This is Acyltransferase MdmB (mdmB) from Streptomyces mycarofaciens.